The following is a 1097-amino-acid chain: DNA-directed RNA polymerase subunit beta (1097 aa).

The tract at residues 1072-1097 (QDVNPRRSTPSRPTYESLGVADYDED) is disordered.

Belongs to the RNA polymerase beta chain family. In terms of assembly, in cyanobacteria the RNAP catalytic core is composed of 2 alpha, 1 beta, 1 beta', 1 gamma and 1 omega subunit. When a sigma factor is associated with the core the holoenzyme is formed, which can initiate transcription.

The enzyme catalyses RNA(n) + a ribonucleoside 5'-triphosphate = RNA(n+1) + diphosphate. DNA-dependent RNA polymerase catalyzes the transcription of DNA into RNA using the four ribonucleoside triphosphates as substrates. The polypeptide is DNA-directed RNA polymerase subunit beta (Prochlorococcus marinus (strain MIT 9303)).